A 510-amino-acid chain; its full sequence is Ribonuclease Y (510 aa).

Residues 2–22 traverse the membrane as a helical segment; the sequence is IYIIFSSIFAGFILGFLVRVF. The KH domain maps to 198-258; sequence TVASVELPND…IRKELAKRTL (61 aa). The region spanning 324 to 419 is the HD domain; the sequence is VLSHSKETAI…VQIADAISAS (96 aa).

Belongs to the RNase Y family.

The protein resides in the cell membrane. Functionally, endoribonuclease that initiates mRNA decay. The polypeptide is Ribonuclease Y (Borrelia garinii subsp. bavariensis (strain ATCC BAA-2496 / DSM 23469 / PBi) (Borreliella bavariensis)).